Consider the following 498-residue polypeptide: Beta-1,3-glucosyltransferase (498 aa).

Residues 1–6 (MRPPAC) are Cytoplasmic-facing. A helical; Signal-anchor for type II membrane protein transmembrane segment spans residues 7-27 (WWLLAPPALLALLTCSLAFGL). Over 28 to 498 (ASEDTKKEVK…ETQKGFREEL (471 aa)) the chain is Lumenal. N-linked (GlcNAc...) asparagine glycosylation is present at asparagine 336. A Prevents secretion from ER motif is present at residues 495–498 (REEL).

It belongs to the glycosyltransferase 31 family. Widely expressed, with highest levels in testis and uterus.

It is found in the endoplasmic reticulum membrane. It functions in the pathway protein modification; protein glycosylation. O-glucosyltransferase that transfers glucose toward fucose with a beta-1,3 linkage. Specifically glucosylates O-linked fucosylglycan on TSP type-1 domains of proteins, thereby contributing to elongation of O-fucosylglycan. This chain is Beta-1,3-glucosyltransferase, found in Homo sapiens (Human).